The sequence spans 843 residues: Neuroligin-1 (843 aa).

The signal sequence occupies residues 1-45 (MALPRCMWPNYVWRAMMACVVHRGSGAPLTLCLLGCLLQTFHVLS). Over 46-697 (QKLDDVDPLV…DQRDYSTELS (652 aa)) the chain is Extracellular. Residue Asn109 is glycosylated (N-linked (GlcNAc...) (complex) asparagine). The cysteines at positions 117 and 153 are disulfide-linked. Positions 167–190 (LTKKHTDDLGDNDGAEDEDIRDSG) are disordered. Residues 175–186 (LGDNDGAEDEDI) are compositionally biased toward acidic residues. Asn303 and Asn343 each carry an N-linked (GlcNAc...) (complex) asparagine glycan. 2 disulfides stabilise this stretch: Cys342/Cys353 and Cys512/Cys546. An N-linked (GlcNAc...) asparagine glycan is attached at Asn547. The segment at 647–688 (TKVPSTDITLRPTRKNSTPVTSAFPTAKQDDPKQQPSPFSVD) is disordered. The span at 661–670 (KNSTPVTSAF) shows a compositional bias: polar residues. O-linked (GalNAc...) serine glycans are attached at residues Ser683 and Ser686. The chain crosses the membrane as a helical span at residues 698-718 (VTIAVGASLLFLNILAFAALY). Residues 719 to 843 (YKKDKRRHDV…HPHSHSTTRV (125 aa)) are Cytoplasmic-facing. Residues 822–843 (GGQNNTLPHPHPHPHSHSTTRV) are disordered. Basic residues predominate over residues 831-843 (PHPHPHSHSTTRV).

Belongs to the type-B carboxylesterase/lipase family. In terms of assembly, interacts with neurexins NRXN1, NRXN2 and NRXN3. Interaction with neurexins is mediated by heparan sulfate glycan modification on neurexin. Interacts (via its C-terminus) with DLG4/PSD-95 (via PDZ domain 3). Interacts with AIP1, GOPC and PDZRN3. Interacts with NLGN3. Brain and arteries (at protein level). Expressed in olfactory bulb. Detected in brain.

Its subcellular location is the cell membrane. It is found in the postsynaptic density. The protein localises to the synaptic cleft. It localises to the synaptic cell membrane. Cell surface protein involved in cell-cell-interactions via its interactions with neurexin family members. Plays a role in synapse function and synaptic signal transmission, and probably mediates its effects by recruiting and clustering other synaptic proteins. May promote the initial formation of synapses, but is not essential for this. In vitro, triggers the de novo formation of presynaptic structures. May be involved in specification of excitatory synapses. Required to maintain wakefulness quality and normal synchrony of cerebral cortex activity during wakefulness and sleep. The protein is involved in nervous system development. The polypeptide is Neuroligin-1 (Nlgn1) (Mus musculus (Mouse)).